The primary structure comprises 430 residues: MALLHSGRVLSGIAAAFHPGLAAAASARASSWWTHVEMGPPDPILGVTEAFKRDTNSKKMNLGVGAYRDDNGKPYVLPSVRKAEAQIAAKNLDKEYLPIGGLAEFCKASAELALGENSEVLKSGRFVTVQTISGTGALRIGASFLQRFFKFSRDVFLPKPSWGNHTPIFRDAGMQLQGYRYYDPKTCGFDFTGAVEDISKIPEQSVLLLHACAHNPTGVDPRPEQWKEIATVVKKRNLFAFFDMAYQGFASGDGDKDAWAVRHFIEQGINVCLCQSYAKNMGLYGERVGAFTMVCKDADEAKRVESQLKILIRPMYSNPPLNGARIAAAILNTPDLRKQWLQEVKGMADRIIGMRTQLVSNLKKEGSTHNWQHITDQIGMFCFTGLKPEQVERLTKEFSIYMTKDGRISVAGVTSGNVGYLAHAIHQVTK.

Residues 1-29 (MALLHSGRVLSGIAAAFHPGLAAAASARA) constitute a mitochondrion transit peptide. At T48 the chain carries Phosphothreonine. At K59 the chain carries N6-acetyllysine. Residue G65 participates in substrate binding. The residue at position 73 (K73) is an N6-acetyllysine; alternate. K73 carries the post-translational modification N6-succinyllysine; alternate. K82 bears the N6-acetyllysine mark. The residue at position 90 (K90) is an N6-acetyllysine; alternate. K90 is modified (N6-succinyllysine; alternate). Y96 bears the 3'-nitrotyrosine; alternate mark. Position 96 is a phosphotyrosine; alternate (Y96). N6-acetyllysine; alternate is present on residues K107 and K122. An N6-succinyllysine; alternate mark is found at K107 and K122. Position 143 is a phosphoserine (S143). An N6-acetyllysine; alternate modification is found at K159. N6-succinyllysine; alternate is present on K159. W162 contributes to the substrate binding site. Position 185 is an N6-acetyllysine; alternate (K185). K185 bears the N6-succinyllysine; alternate mark. N215 provides a ligand contact to substrate. The residue at position 227 (K227) is an N6-succinyllysine. At K234 the chain carries N6-acetyllysine. Residues K279 and K296 each carry the N6-acetyllysine; alternate modification. N6-(pyridoxal phosphate)lysine; alternate is present on K279. N6-succinyllysine; alternate is present on K296. K302 carries the post-translational modification N6-acetyllysine. An N6-acetyllysine; alternate modification is found at K309. An N6-succinyllysine; alternate modification is found at K309. R313 bears the Asymmetric dimethylarginine mark. Residue T333 is modified to Phosphothreonine. Position 338 is an N6-acetyllysine; alternate (K338). K338 is subject to N6-succinyllysine; alternate. The residue at position 345 (K345) is an N6-acetyllysine. Position 363 is an N6-acetyllysine; alternate (K363). An N6-succinyllysine; alternate modification is found at K363. N6-acetyllysine is present on residues K364 and K387. K396 and K404 each carry N6-acetyllysine; alternate. An N6-succinyllysine; alternate mark is found at K396 and K404. Residue R407 participates in substrate binding.

This sequence belongs to the class-I pyridoxal-phosphate-dependent aminotransferase family. Homodimer. Pyridoxal 5'-phosphate is required as a cofactor.

The protein localises to the mitochondrion matrix. The protein resides in the cell membrane. It carries out the reaction L-aspartate + 2-oxoglutarate = oxaloacetate + L-glutamate. The enzyme catalyses L-kynurenine + 2-oxoglutarate = kynurenate + L-glutamate + H2O. Functionally, catalyzes the irreversible transamination of the L-tryptophan metabolite L-kynurenine to form kynurenic acid (KA). As a member of the malate-aspartate shuttle, it has a key role in the intracellular NAD(H) redox balance. Is important for metabolite exchange between mitochondria and cytosol, and for amino acid metabolism. Facilitates cellular uptake of long-chain free fatty acids. This Macaca fascicularis (Crab-eating macaque) protein is Aspartate aminotransferase, mitochondrial (GOT2).